A 352-amino-acid chain; its full sequence is Protein RecA (352 aa).

68–75 (GPESSGKT) contacts ATP.

This sequence belongs to the RecA family.

The protein localises to the cytoplasm. Functionally, can catalyze the hydrolysis of ATP in the presence of single-stranded DNA, the ATP-dependent uptake of single-stranded DNA by duplex DNA, and the ATP-dependent hybridization of homologous single-stranded DNAs. It interacts with LexA causing its activation and leading to its autocatalytic cleavage. This chain is Protein RecA, found in Clostridium perfringens (strain SM101 / Type A).